Here is a 193-residue protein sequence, read N- to C-terminus: MGYETKSTLDTERSTAPGTGTTTKSCSMTQVVLRFVLFAATLTSIVVMVTSKQTKNIFLPGTPIRIPAAEFTNSPALIYFVVALSVACFYSIVSTFVTVSAFKKHSCSAVLLLNLAIMDAVMVGIVASATGAGGGVAYLGLKGNKEVRWGKICHIYDKFCRHVGGAIAVSLFASVVLLLLSIISVLSLYKKIR.

The segment at 1–24 is disordered; the sequence is MGYETKSTLDTERSTAPGTGTTTK. Residues 1–30 lie on the Cytoplasmic side of the membrane; sequence MGYETKSTLDTERSTAPGTGTTTKSCSMTQ. The span at 14 to 24 shows a compositional bias: polar residues; that stretch reads STAPGTGTTTK. Residues 31-51 traverse the membrane as a helical segment; the sequence is VVLRFVLFAATLTSIVVMVTS. Residues 52 to 76 are Extracellular-facing; the sequence is KQTKNIFLPGTPIRIPAAEFTNSPA. A helical transmembrane segment spans residues 77–97; that stretch reads LIYFVVALSVACFYSIVSTFV. Over 98–108 the chain is Cytoplasmic; the sequence is TVSAFKKHSCS. A helical membrane pass occupies residues 109–129; it reads AVLLLNLAIMDAVMVGIVASA. Topologically, residues 130–162 are extracellular; the sequence is TGAGGGVAYLGLKGNKEVRWGKICHIYDKFCRH. A helical transmembrane segment spans residues 163–183; sequence VGGAIAVSLFASVVLLLLSII. At 184 to 193 the chain is on the cytoplasmic side; sequence SVLSLYKKIR.

It belongs to the Casparian strip membrane proteins (CASP) family. As to quaternary structure, homodimer and heterodimers.

It is found in the cell membrane. This chain is CASP-like protein 1D1, found in Arabidopsis thaliana (Mouse-ear cress).